An 864-amino-acid polypeptide reads, in one-letter code: A-kinase anchor protein 3 (864 aa).

Phosphoserine; by STK33 is present on Ser-12. Residues Val-125 to Ala-138 form a PKA-RII subunit binding domain region. Disordered regions lie at residues Asn-190 to Gly-235 and Ala-251 to Asn-281. Positions Ser-204–Leu-218 are enriched in polar residues. Residue Ser-206 is modified to Phosphoserine. Positions Lys-219–Gly-235 are enriched in basic and acidic residues. Residue Ser-405 is modified to Phosphoserine. A Phosphotyrosine modification is found at Tyr-406. Residues Val-619–Pro-638 are disordered. Positions Glu-627–Pro-638 are enriched in basic and acidic residues.

Belongs to the AKAP110 family. Interacts with ROPN1 and ROPN1L. Interacts with QRICH2. Phosphorylated by STK33 during sperm flagella assembly. Phosphorylated on tyrosine.

The protein localises to the cytoplasmic vesicle. It localises to the secretory vesicle. The protein resides in the acrosome. It is found in the cell projection. Its subcellular location is the cilium. The protein localises to the flagellum. Structural component of sperm fibrous sheath. Required for the formation of the subcellular structure of the sperm flagellum, sperm motility and male fertility. This Mus musculus (Mouse) protein is A-kinase anchor protein 3.